We begin with the raw amino-acid sequence, 209 residues long: High frequency lysogenization protein HflD homolog (209 aa).

Residues 79-121 adopt a coiled-coil conformation; it reads QGLNAELTRYTLSLMVLERKLNSAKGAMDTLGDRIAGLQRQLD.

Belongs to the HflD family.

It is found in the cytoplasm. It localises to the cell inner membrane. The protein is High frequency lysogenization protein HflD homolog of Enterobacter sp. (strain 638).